Consider the following 413-residue polypeptide: MRSRAARKFSTTPGTRDVLPPESTRLLDVQRRVLGRFRLHGFREVITPALEYAEVVEEARLRDSAFKLFDPDNQMLLLRPEMTTPIARLVSQRLRNAPPPFKLSYSLPVYRRSEVGRGQSAEFHQAGVEVVGSASPGEDAGTIALLVEALEAAGLGPGEDFMVVLGQAAFYRGFLERSCPEVAPALLSALAGKDLVRVEELSRRLPDAVAAGARGIPRLVGPASDGAVLEEAERYASGGGGAALENLRAILELLGAHGRLEAVMLDLGLIGRHDYYTGAVYEVYAAGLGFTVANGGRYDNLLRRFGEPLPATGFAISLERLVSVLPPERPAPLLVLVGEDAEAVRAARALRGEGVPVLHVSGGLAPEEAERYARSVDARWVGYPAPGGVKLREVGEGGFWLLAVEEAARRVLG.

The segment at 1–21 is disordered; sequence MRSRAARKFSTTPGTRDVLPP.

It belongs to the class-II aminoacyl-tRNA synthetase family. HisZ subfamily. In terms of assembly, heteromultimer composed of HisG and HisZ subunits.

Its subcellular location is the cytoplasm. The protein operates within amino-acid biosynthesis; L-histidine biosynthesis; L-histidine from 5-phospho-alpha-D-ribose 1-diphosphate: step 1/9. In terms of biological role, required for the first step of histidine biosynthesis. May allow the feedback regulation of ATP phosphoribosyltransferase activity by histidine. The polypeptide is ATP phosphoribosyltransferase regulatory subunit (Rubrobacter xylanophilus (strain DSM 9941 / JCM 11954 / NBRC 16129 / PRD-1)).